Here is a 153-residue protein sequence, read N- to C-terminus: T cell receptor delta constant (153 aa).

N-linked (GlcNAc...) asparagine glycosylation is present at N14. The cysteines at positions 20 and 71 are disulfide-linked. N77 carries N-linked (GlcNAc...) asparagine glycosylation. The segment covering 85 to 102 has biased composition (basic and acidic residues); that stretch reads FEVKTDSTDHVKPKETEN. Positions 85–112 are disordered; it reads FEVKTDSTDHVKPKETENTKQPSKSCHK. Residues 130-152 traverse the membrane as a helical segment; it reads LGLRMLFAKTVAVNFLLTAKLFF.

In terms of assembly, gamma-delta TR is a heterodimer composed of a gamma and delta chain; disulfide-linked. The gamma-delta TR is associated with the transmembrane signaling CD3 coreceptor proteins following the stoichiometry: a single gamma-delta TR heterodimer associates with one CD3D-CD3E heterodimer, one CD3G-CD3E heterodimer and one CD247 homodimer forming a stable octameric structure. Upon activation, gamma-delta TR complex associates with FCER1G to initiate intracellular signaling.

The protein resides in the cell membrane. Constant region of T cell receptor (TR) delta chain that participates in the antigen recognition. Gamma-delta TRs recognize a variety of self and foreign non-peptide antigens frequently expressed at the epithelial boundaries between the host and external environment, including endogenous lipids presented by MH-like protein CD1D and phosphoantigens presented by butyrophilin-like molecule BTN3A1. Upon antigen recognition induces rapid, innate-like immune responses involved in pathogen clearance and tissue repair. Binding of gamma-delta TR complex to antigen triggers phosphorylation of immunoreceptor tyrosine-based activation motifs (ITAMs) in the CD3 chains by the LCK and FYN kinases, allowing the recruitment, phosphorylation, and activation of ZAP70 that facilitates phosphorylation of the scaffolding proteins LCP2 and LAT. This lead to the formation of a supramolecular signalosome that recruits the phospholipase PLCG1, resulting in calcium mobilization and ERK activation, ultimately leading to T cell expansion and differentiation into effector cells. Gamma-delta TRs are produced through somatic rearrangement of a limited repertoire of variable (V), diversity (D), and joining (J) genes. The potential diversity of gamma-delta TRs is conferred by the unique ability to rearrange (D) genes in tandem and to utilize all three reading frames. The combinatorial diversity is considerably increased by the sequence exonuclease trimming and random nucleotide (N) region additions which occur during the V-(D)-J rearrangements. The sequence is that of T cell receptor delta constant from Homo sapiens (Human).